A 320-amino-acid chain; its full sequence is GTP 3',8-cyclase (320 aa).

The Radical SAM core domain maps to 4 to 227 (LYSRRINYMR…METEKSSPAK (224 aa)). Arg-13 contributes to the GTP binding site. The [4Fe-4S] cluster site is built by Cys-20 and Cys-24. Tyr-26 is a binding site for S-adenosyl-L-methionine. Cys-27 lines the [4Fe-4S] cluster pocket. Arg-63 is a GTP binding site. Gly-67 contributes to the S-adenosyl-L-methionine binding site. Residue Thr-94 coordinates GTP. Residue Ser-118 participates in S-adenosyl-L-methionine binding. Lys-155 contacts GTP. Residue Met-189 coordinates S-adenosyl-L-methionine. Cys-249 and Cys-252 together coordinate [4Fe-4S] cluster. Residue 254 to 256 (RVR) coordinates GTP. Cys-266 contributes to the [4Fe-4S] cluster binding site. Residues 300–312 (KHDLLTDSHEESN) are compositionally biased toward basic and acidic residues. The tract at residues 300 to 320 (KHDLLTDSHEESNRGMSQIGG) is disordered.

The protein belongs to the radical SAM superfamily. MoaA family. In terms of assembly, monomer and homodimer. [4Fe-4S] cluster serves as cofactor.

It catalyses the reaction GTP + AH2 + S-adenosyl-L-methionine = (8S)-3',8-cyclo-7,8-dihydroguanosine 5'-triphosphate + 5'-deoxyadenosine + L-methionine + A + H(+). Its pathway is cofactor biosynthesis; molybdopterin biosynthesis. Its function is as follows. Catalyzes the cyclization of GTP to (8S)-3',8-cyclo-7,8-dihydroguanosine 5'-triphosphate. The protein is GTP 3',8-cyclase of Alkaliphilus oremlandii (strain OhILAs) (Clostridium oremlandii (strain OhILAs)).